The primary structure comprises 77 residues: Large ribosomal subunit protein uL29 (77 aa).

Belongs to the universal ribosomal protein uL29 family.

This chain is Large ribosomal subunit protein uL29, found in Gluconobacter oxydans (strain 621H) (Gluconobacter suboxydans).